A 209-amino-acid chain; its full sequence is Redox-sensing transcriptional repressor Rex (209 aa).

The H-T-H motif DNA-binding region spans 16 to 55 (LYYRFIQNLSLSGKQRVSSAELSEAVKVDSATIRRDFSYF). Residue 90–95 (GVGNLG) coordinates NAD(+).

This sequence belongs to the transcriptional regulatory Rex family. As to quaternary structure, homodimer.

Its subcellular location is the cytoplasm. In terms of biological role, modulates transcription in response to changes in cellular NADH/NAD(+) redox state. The polypeptide is Redox-sensing transcriptional repressor Rex (Bacillus cereus (strain G9842)).